A 210-amino-acid polypeptide reads, in one-letter code: Ribosomal RNA large subunit methyltransferase E (210 aa).

Residues glycine 60, tryptophan 62, aspartate 85, aspartate 101, and aspartate 126 each contribute to the S-adenosyl-L-methionine site. Lysine 166 acts as the Proton acceptor in catalysis.

The protein belongs to the class I-like SAM-binding methyltransferase superfamily. RNA methyltransferase RlmE family.

The protein localises to the cytoplasm. The enzyme catalyses uridine(2552) in 23S rRNA + S-adenosyl-L-methionine = 2'-O-methyluridine(2552) in 23S rRNA + S-adenosyl-L-homocysteine + H(+). Its function is as follows. Specifically methylates the uridine in position 2552 of 23S rRNA at the 2'-O position of the ribose in the fully assembled 50S ribosomal subunit. In Bordetella pertussis (strain Tohama I / ATCC BAA-589 / NCTC 13251), this protein is Ribosomal RNA large subunit methyltransferase E.